The chain runs to 417 residues: Gamma-glutamyl phosphate reductase (417 aa).

The protein belongs to the gamma-glutamyl phosphate reductase family.

The protein localises to the cytoplasm. The catalysed reaction is L-glutamate 5-semialdehyde + phosphate + NADP(+) = L-glutamyl 5-phosphate + NADPH + H(+). Its pathway is amino-acid biosynthesis; L-proline biosynthesis; L-glutamate 5-semialdehyde from L-glutamate: step 2/2. In terms of biological role, catalyzes the NADPH-dependent reduction of L-glutamate 5-phosphate into L-glutamate 5-semialdehyde and phosphate. The product spontaneously undergoes cyclization to form 1-pyrroline-5-carboxylate. The protein is Gamma-glutamyl phosphate reductase of Idiomarina loihiensis (strain ATCC BAA-735 / DSM 15497 / L2-TR).